The following is a 150-amino-acid chain: D-aminoacyl-tRNA deacylase (150 aa).

The Gly-cisPro motif, important for rejection of L-amino acids motif lies at 138–139 (GP).

This sequence belongs to the DTD family. As to quaternary structure, homodimer.

It is found in the cytoplasm. The enzyme catalyses glycyl-tRNA(Ala) + H2O = tRNA(Ala) + glycine + H(+). It carries out the reaction a D-aminoacyl-tRNA + H2O = a tRNA + a D-alpha-amino acid + H(+). An aminoacyl-tRNA editing enzyme that deacylates mischarged D-aminoacyl-tRNAs. Also deacylates mischarged glycyl-tRNA(Ala), protecting cells against glycine mischarging by AlaRS. Acts via tRNA-based rather than protein-based catalysis; rejects L-amino acids rather than detecting D-amino acids in the active site. By recycling D-aminoacyl-tRNA to D-amino acids and free tRNA molecules, this enzyme counteracts the toxicity associated with the formation of D-aminoacyl-tRNA entities in vivo and helps enforce protein L-homochirality. The sequence is that of D-aminoacyl-tRNA deacylase from Opitutus terrae (strain DSM 11246 / JCM 15787 / PB90-1).